Consider the following 25-residue polypeptide: Caerin-1.9 (25 aa).

Leucine 25 carries the post-translational modification Leucine amide.

Belongs to the frog skin active peptide (FSAP) family. Caerin subfamily. In terms of tissue distribution, expressed by the skin dorsal glands.

The protein localises to the secreted. Functionally, antimicrobial peptide. Adopts an alpha helical conformation which can disrupt bacterial membranes. Strongly inhibits the formation of NO by neuronal nitric oxide synthase (nNOS) at micromolar concentrations. Acts by a non-competitive mechanism, probably by binding to calcium/calmodulin and as a consequence blocking calmodulin attachment to nNOS. The sequence is that of Caerin-1.9 from Ranoidea chloris (Red-eyed tree frog).